A 311-amino-acid chain; its full sequence is Ribosomal protein L11 methyltransferase (311 aa).

Positions 163, 184, 206, and 248 each coordinate S-adenosyl-L-methionine.

It belongs to the methyltransferase superfamily. PrmA family.

Its subcellular location is the cytoplasm. The enzyme catalyses L-lysyl-[protein] + 3 S-adenosyl-L-methionine = N(6),N(6),N(6)-trimethyl-L-lysyl-[protein] + 3 S-adenosyl-L-homocysteine + 3 H(+). Functionally, methylates ribosomal protein L11. The chain is Ribosomal protein L11 methyltransferase from Clostridium acetobutylicum (strain ATCC 824 / DSM 792 / JCM 1419 / IAM 19013 / LMG 5710 / NBRC 13948 / NRRL B-527 / VKM B-1787 / 2291 / W).